Here is a 96-residue protein sequence, read N- to C-terminus: MAAAWREGDDLLLRLYIQPKASRDSIVGLHGEELKVAITAPPIDGKANAHLSKYLAKLCKVAKGSVVVEKGELGRHKQVRILQPSQIPAEIAALIE.

This sequence belongs to the UPF0235 family.

The sequence is that of UPF0235 protein VC_0458 from Vibrio cholerae serotype O1 (strain ATCC 39315 / El Tor Inaba N16961).